The following is a 502-amino-acid chain: Chromatin structure-remodeling complex protein RSC58 (502 aa).

The region spanning 19 to 134 is the Bromo domain; that stretch reads SILNAASVKC…KFSSELLLRE (116 aa). The disordered stretch occupies residues 336–378; that stretch reads NEEGINRKQNDENNKNVDGKSNGVQDDGGDNDNDATIASANSE. Residues 339 to 353 are compositionally biased toward basic and acidic residues; the sequence is GINRKQNDENNKNVD.

Component of the two forms of the RSC complex composed of at least either RSC1 or RSC2, and ARP7, ARP9, LDB7, NPL6, RSC3, RSC30, RSC4, RSC58, RSC6, RSC8, RSC9, SFH1, STH1, HTL1 and probably RTT102. The complexes interact with histone and histone variant components of centromeric chromatin.

Its subcellular location is the nucleus. In terms of biological role, component of the chromatin structure-remodeling complex (RSC), which is involved in transcription regulation and nucleosome positioning. RSC is responsible for the transfer of a histone octamer from a nucleosome core particle to naked DNA. The reaction requires ATP and involves an activated RSC-nucleosome intermediate. Remodeling reaction also involves DNA translocation, DNA twist and conformational change. As a reconfigurer of centromeric and flanking nucleosomes, RSC complex is required both for proper kinetochore function in chromosome segregation and, via a PKC1-dependent signaling pathway, for organization of the cellular cytoskeleton. The chain is Chromatin structure-remodeling complex protein RSC58 (RSC58) from Saccharomyces cerevisiae (strain ATCC 204508 / S288c) (Baker's yeast).